An 821-amino-acid chain; its full sequence is DNA ligase (821 aa).

Residues aspartate 33–aspartate 37, serine 82–leucine 83, and glutamate 113 contribute to the NAD(+) site. Lysine 115 acts as the N6-AMP-lysine intermediate in catalysis. Residues arginine 136, glutamate 173, lysine 290, and lysine 314 each contribute to the NAD(+) site. The Zn(2+) site is built by cysteine 408, cysteine 411, cysteine 426, and cysteine 432. Residues isoleucine 741–glutamate 821 form the BRCT domain.

Belongs to the NAD-dependent DNA ligase family. LigA subfamily. The cofactor is Mg(2+). Mn(2+) is required as a cofactor.

The catalysed reaction is NAD(+) + (deoxyribonucleotide)n-3'-hydroxyl + 5'-phospho-(deoxyribonucleotide)m = (deoxyribonucleotide)n+m + AMP + beta-nicotinamide D-nucleotide.. DNA ligase that catalyzes the formation of phosphodiester linkages between 5'-phosphoryl and 3'-hydroxyl groups in double-stranded DNA using NAD as a coenzyme and as the energy source for the reaction. It is essential for DNA replication and repair of damaged DNA. The protein is DNA ligase of Stenotrophomonas maltophilia (strain R551-3).